Consider the following 415-residue polypeptide: MPLEYMGGRLATLDDVDVRGKKVIVRFDLNSPVGNGGEILDDSRIAEAAGTLRELCDRGAAVVALSHQGRPLESDFVSLERHASLLSRYSGVEVRFVMDVIGPEALRTVASLRPGEAVLLDNTRIISEDFIEAEGTVHARGIMVTRLSKLANMYVNEAFSASHRSQASIVGFPYVLPSAGGRVLEKEIRSLNRAVSSGERPKVVVLGGAKLKDAVRIVDYLSSSGVADEVLTTGLVGLLFLYARGYRLPRDVTKLLEKKGGEEAIAKARRIVEEGRRVRTPIDFVVEVGDKIYIKPADELTEGVPKDIGPSTVEYFRAKMRGARVIVMRGPAGVIEDPRFRRGTVELVKAALSSGAYTVFGGGHFRAILRDLPEHLSSKVGHLSTGGGALLYYLSGRPLPGVKALVDSARIFNLV.

Residues 28–30 (DLN), Arg-44, 67–70 (HQGR), Arg-124, and Arg-164 each bind substrate. ATP contacts are provided by residues Glu-336 and 362 to 365 (GGHF).

The protein belongs to the phosphoglycerate kinase family.

Its subcellular location is the cytoplasm. It carries out the reaction (2R)-3-phosphoglycerate + ATP = (2R)-3-phospho-glyceroyl phosphate + ADP. It functions in the pathway carbohydrate degradation; glycolysis; pyruvate from D-glyceraldehyde 3-phosphate: step 2/5. The chain is Phosphoglycerate kinase (pgk) from Aeropyrum pernix (strain ATCC 700893 / DSM 11879 / JCM 9820 / NBRC 100138 / K1).